Consider the following 213-residue polypeptide: ABA-inducible protein PHV A1 (213 aa).

Disordered stretches follow at residues 1–158 (MASN…KDKT) and 182–213 (NTLGMGGDNTSATKDATTGATVKDTTTTTRNH). Basic and acidic residues predominate over residues 13-23 (GETKARTEEKT). LEA 11-mer repeat repeat units lie at residues 27–37 (MGATKQKAGQT), 38–48 (TEATKQKAGET), 49–59 (AEATKQKTGET), 60–70 (AEAAKQKAAEA), 78–88 (AQAAKDKTYET), 89–99 (AQAAKERAAQG), 111–121 (TEAAKQKAAET), 122–132 (TEAAKQKAAEA), and 133–143 (TEAAKQKASDT). Residues 27–143 (MGATKQKAGQ…EAAKQKASDT (117 aa)) are 11 X 11 AA tandem repeats of T-E-A-A-K-Q-K-A-A-E-T. Composition is skewed to basic and acidic residues over residues 41–74 (TKQKAGETAEATKQKTGETAEAAKQKAAEAKDKT), 81–98 (AKDKTYETAQAAKERAAQ), and 109–140 (EKTEAAKQKAAETTEAAKQKAAEATEAAKQKA). Low complexity predominate over residues 193 to 213 (ATKDATTGATVKDTTTTTRNH).

This sequence belongs to the LEA type 4 family.

This is ABA-inducible protein PHV A1 (HVA1) from Hordeum vulgare (Barley).